The following is a 551-amino-acid chain: Meiotically up-regulated gene 184 protein (551 aa).

The J domain maps to 12-78 (DYYAILKLQK…TKRLIYDQLF (67 aa)). Positions 85–122 (RSQYKPNSTSNPSKHTSAYASYNKGKNSKWSSPFASTT) are enriched in polar residues. Disordered stretches follow at residues 85 to 153 (RSQY…FPRD), 176 to 226 (RQEP…SVYK), and 334 to 359 (EAES…TRNN). Positions 124 to 133 (KPQESSEKYS) are enriched in basic and acidic residues. The span at 134–146 (KKSSTRKKEHFNK) shows a compositional bias: basic residues. 2 stretches are compositionally biased toward basic and acidic residues: residues 176–187 (RQEPESLKKENN) and 203–219 (GPKD…KIPE).

The protein resides in the cytoplasm. Its subcellular location is the cytoskeleton. In terms of biological role, has a role in sporulation. This chain is Meiotically up-regulated gene 184 protein (mug184), found in Schizosaccharomyces pombe (strain 972 / ATCC 24843) (Fission yeast).